Here is a 71-residue protein sequence, read N- to C-terminus: UPF0499 protein ACLA_083080 (71 aa).

A signal peptide spans 1–18 (MKFLNILTLAFITGMASA). Cystine bridges form between C44-C58, C48-C61, and C54-C68.

It belongs to the UPF0499 family.

The protein resides in the secreted. This chain is UPF0499 protein ACLA_083080, found in Aspergillus clavatus (strain ATCC 1007 / CBS 513.65 / DSM 816 / NCTC 3887 / NRRL 1 / QM 1276 / 107).